The sequence spans 180 residues: Pro-glucagon (180 aa).

Residues 1–20 form the signal peptide; it reads MKTIYFVAGLFVMLVQGSWQ. Residues 25 to 59 are disordered; sequence NTEEKSRSFPAPQTDPLDDPDQMTEDKRHSQGTFT. Ser-54 is modified (phosphoserine). The propeptide occupies 84 to 89; it reads NKNNIA. Phosphoserine is present on residues Ser-105 and Ser-108. Arg-127 bears the Arginine amide mark. A propeptide spanning residues 131–145 is cleaved from the precursor; it reads DFPEEVTIVEELRRR. Phosphoserine occurs at positions 150 and 152.

The protein belongs to the glucagon family. In terms of processing, proglucagon is post-translationally processed in a tissue-specific manner in pancreatic A cells and intestinal L cells. In pancreatic A cells, the major bioactive hormone is glucagon cleaved by PCSK2/PC2. In the intestinal L cells PCSK1/PC1 liberates GLP-1, GLP-2, glicentin and oxyntomodulin. GLP-1 is further N-terminally truncated by post-translational processing in the intestinal L cells resulting in GLP-1(7-37) GLP-1-(7-36)amide. The C-terminal amidation is neither important for the metabolism of GLP-1 nor for its effects on the endocrine pancreas. As to expression, glucagon is secreted in the A cells of the islets of Langerhans. GLP-1, GLP-2, oxyntomodulin and glicentin are secreted from enteroendocrine cells throughout the gastrointestinal tract. GLP-1 and GLP-2 are also secreted in selected neurons in the brain.

It is found in the secreted. Functionally, plays a key role in glucose metabolism and homeostasis. Regulates blood glucose by increasing gluconeogenesis and decreasing glycolysis. A counterregulatory hormone of insulin, raises plasma glucose levels in response to insulin-induced hypoglycemia. Plays an important role in initiating and maintaining hyperglycemic conditions in diabetes. In terms of biological role, potent stimulator of glucose-dependent insulin release. Also stimulates insulin release in response to IL6. Plays important roles on gastric motility and the suppression of plasma glucagon levels. May be involved in the suppression of satiety and stimulation of glucose disposal in peripheral tissues, independent of the actions of insulin. Has growth-promoting activities on intestinal epithelium. May also regulate the hypothalamic pituitary axis (HPA) via effects on LH, TSH, CRH, oxytocin, and vasopressin secretion. Increases islet mass through stimulation of islet neogenesis and pancreatic beta cell proliferation. Inhibits beta cell apoptosis. Stimulates intestinal growth and up-regulates villus height in the small intestine, concomitant with increased crypt cell proliferation and decreased enterocyte apoptosis. The gastrointestinal tract, from the stomach to the colon is the principal target for GLP-2 action. Plays a key role in nutrient homeostasis, enhancing nutrient assimilation through enhanced gastrointestinal function, as well as increasing nutrient disposal. Stimulates intestinal glucose transport and decreases mucosal permeability. Its function is as follows. Significantly reduces food intake. Inhibits gastric emptying in humans. Suppression of gastric emptying may lead to increased gastric distension, which may contribute to satiety by causing a sensation of fullness. Functionally, may modulate gastric acid secretion and the gastro-pyloro-duodenal activity. May play an important role in intestinal mucosal growth in the early period of life. The protein is Pro-glucagon (GCG) of Sus scrofa (Pig).